Consider the following 108-residue polypeptide: MTNYSSVGRLCRVVNKYKSDFDVNIHRGTFWGNYVGKDAGSREAAIELFKKDFIRRIKSGEITKAHLEPLRGMRLGCTCKPKPCHGDIIAHIVNRLFKDDFQVEDLCN.

This is an uncharacterized protein from Enterobacteria phage T4 (Bacteriophage T4).